A 138-amino-acid chain; its full sequence is Transcription antitermination protein NusB (138 aa).

The protein belongs to the NusB family.

Involved in transcription antitermination. Required for transcription of ribosomal RNA (rRNA) genes. Binds specifically to the boxA antiterminator sequence of the ribosomal RNA (rrn) operons. The polypeptide is Transcription antitermination protein NusB (Helicobacter acinonychis (strain Sheeba)).